Reading from the N-terminus, the 721-residue chain is YTH domain-containing protein 1 (721 aa).

Positions glutamate 29–aspartate 38 are enriched in acidic residues. The segment at glutamate 29–lysine 239 is disordered. Residues serine 48–serine 75 are compositionally biased toward low complexity. Basic and acidic residues predominate over residues alanine 135–proline 151. Residues threonine 254 to phenylalanine 391 enclose the YTH domain. RNA-binding positions include lysine 260–asparagine 262, tryptophan 276, and tryptophan 327. Disordered stretches follow at residues proline 424–histidine 471, aspartate 580–proline 605, and alanine 651–arginine 721. Residues glycine 432–glycine 443 show a composition bias toward gly residues. Residues proline 451–histidine 471 are compositionally biased toward basic residues. Over residues glycine 583–glycine 600 the composition is skewed to pro residues. A compositionally biased stretch (gly residues) spans alanine 651–glycine 670. Positions arginine 699 to glycine 708 are enriched in basic and acidic residues.

The protein localises to the nucleus. Its function is as follows. Regulator of alternative splicing that specifically recognizes and binds N6-methyladenosine (m6A)-containing RNAs. Acts by acting as a reader of m6A methylation. Required for sex determination and dosage compensation via Sxl alternative splicing: m6A methylation acts as a key regulator of Sxl pre-mRNA and promotes female-specific alternative splicing of Sxl, which determines female physiognomy. M6A methylation is also required for neuronal functions. This chain is YTH domain-containing protein 1, found in Drosophila melanogaster (Fruit fly).